A 301-amino-acid polypeptide reads, in one-letter code: MNWITNYVRPRINSMLGRREVPENLWIKCPETGEMVFHKDLESNKWVIPASGYHMKMPAKARLADLFDNGEYESLPQPKVAQDPLKFRDSKKYIDRLRDSRVKTEQEDTILAGLGKVRGLKLVAVVHEFNFIGGSLGIAAGEAIVKAFERATLEKCPLVMFPASGGARMQEGILSLMQLPRTTVAVDLLKESGQPYVVVLTNPTTGGVTASYAMLGDIHLAEPGAEIGFAGKRVIEQTLREKLPEGFQTSEYLLEHGMVDMVVKRHDIPETLARLLKILTKKPVSAANDMNGGAIALAASA.

One can recognise a CoA carboxyltransferase N-terminal domain in the interval 25 to 294 (LWIKCPETGE…SAANDMNGGA (270 aa)).

The protein belongs to the AccD/PCCB family. As to quaternary structure, acetyl-CoA carboxylase is a heterohexamer composed of biotin carboxyl carrier protein (AccB), biotin carboxylase (AccC) and two subunits each of ACCase subunit alpha (AccA) and ACCase subunit beta (AccD).

The protein resides in the cytoplasm. The catalysed reaction is N(6)-carboxybiotinyl-L-lysyl-[protein] + acetyl-CoA = N(6)-biotinyl-L-lysyl-[protein] + malonyl-CoA. It participates in lipid metabolism; malonyl-CoA biosynthesis; malonyl-CoA from acetyl-CoA: step 1/1. Functionally, component of the acetyl coenzyme A carboxylase (ACC) complex. Biotin carboxylase (BC) catalyzes the carboxylation of biotin on its carrier protein (BCCP) and then the CO(2) group is transferred by the transcarboxylase to acetyl-CoA to form malonyl-CoA. This is Acetyl-coenzyme A carboxylase carboxyl transferase subunit beta from Rhizobium etli (strain CIAT 652).